A 584-amino-acid chain; its full sequence is Proline--tRNA ligase (584 aa).

The protein belongs to the class-II aminoacyl-tRNA synthetase family. ProS type 1 subfamily. In terms of assembly, homodimer.

It localises to the cytoplasm. It carries out the reaction tRNA(Pro) + L-proline + ATP = L-prolyl-tRNA(Pro) + AMP + diphosphate. Functionally, catalyzes the attachment of proline to tRNA(Pro) in a two-step reaction: proline is first activated by ATP to form Pro-AMP and then transferred to the acceptor end of tRNA(Pro). As ProRS can inadvertently accommodate and process non-cognate amino acids such as alanine and cysteine, to avoid such errors it has two additional distinct editing activities against alanine. One activity is designated as 'pretransfer' editing and involves the tRNA(Pro)-independent hydrolysis of activated Ala-AMP. The other activity is designated 'posttransfer' editing and involves deacylation of mischarged Ala-tRNA(Pro). The misacylated Cys-tRNA(Pro) is not edited by ProRS. This is Proline--tRNA ligase from Mycobacterium sp. (strain KMS).